The primary structure comprises 307 residues: NAD(+) hydrolase TcpC (307 aa).

Residues 22 to 42 (YNILFFIFLSIAIPFLLFLAW) form a helical membrane-spanning segment. One can recognise a TIR domain in the interval 169 to 303 (THYDFFISHA…EIARELAEIA (135 aa)). NAD(+) contacts are provided by residues 178–179 (AK) and Glu-208. The active site involves Glu-244.

As to quaternary structure, interacts with host MYD88. Interacts with host TLR4.

It localises to the secreted. Its subcellular location is the membrane. The enzyme catalyses NAD(+) + H2O = ADP-D-ribose + nicotinamide + H(+). The catalysed reaction is NADP(+) + H2O = ADP-D-ribose 2'-phosphate + nicotinamide + H(+). Functionally, virulence factor that suppresses host Toll-like receptor (TLR)-mediated cytokine production upon infection, thereby increasing bacterial burden in the urinary tract and promoting renal tissue damage. Acts as a NAD(+) hydrolase (NADase) by catalyzing cleavage of NAD(+) into ADP-D-ribose (ADPR) and nicotinamide. Also able to hydrolyze NADP(+), but not other NAD(+)-related molecules. The polypeptide is NAD(+) hydrolase TcpC (Escherichia coli O6:H1 (strain CFT073 / ATCC 700928 / UPEC)).